The following is a 273-amino-acid chain: MALKNFNPITPSLRELVQVDKTSLWKGRPLKSLTKGISKTGGRNNQGRITSWHRGGGHKKLYRIIDFKRNKIDISAIVERIEYDPNRTAFIALIKYEDGEYSYILAPQKLSVGDRVISSQDADIKIGNCLPLKCIPIGTTLHNVEMKVGKGGQIARSAGTSVDLVGKDSGYAQIKLRSGEFRLVPLDCKATIGSISNPDQKNINLGKAGRNRWLGWRPHVRGVAMNPVDHPHGGGEGKTSGGRHPVTPWGFPTKGKKTRKNKRTSKFIVKKRK.

Residues valine 228–lysine 273 form a disordered region. Positions lysine 254–lysine 273 are enriched in basic residues.

The protein belongs to the universal ribosomal protein uL2 family. As to quaternary structure, part of the 50S ribosomal subunit. Forms a bridge to the 30S subunit in the 70S ribosome.

Functionally, one of the primary rRNA binding proteins. Required for association of the 30S and 50S subunits to form the 70S ribosome, for tRNA binding and peptide bond formation. It has been suggested to have peptidyltransferase activity; this is somewhat controversial. Makes several contacts with the 16S rRNA in the 70S ribosome. This Rickettsia africae (strain ESF-5) protein is Large ribosomal subunit protein uL2.